Here is a 461-residue protein sequence, read N- to C-terminus: L-cystine uptake protein TcyP (461 aa).

Transmembrane regions (helical) follow at residues 1-21 (MTLF…LLYM), 33-53 (VFTA…IYGS), 72-92 (YVKL…LGAF), 104-124 (ISGL…AVGI), 183-203 (PTST…YLGV), 224-244 (IIMR…LAIM), 262-282 (FVIA…LLIT), 337-357 (LSIG…IMIA), 369-389 (FLFT…GVGG), and 393-413 (FAAL…GLLI).

It belongs to the dicarboxylate/amino acid:cation symporter (DAACS) (TC 2.A.23) family.

The protein resides in the membrane. Mediates uptake of L-cystine, the oxidized form of L-cysteine. This Bacillus licheniformis (strain ATCC 14580 / DSM 13 / JCM 2505 / CCUG 7422 / NBRC 12200 / NCIMB 9375 / NCTC 10341 / NRRL NRS-1264 / Gibson 46) protein is L-cystine uptake protein TcyP (tcyP).